The chain runs to 443 residues: Xaa-Pro dipeptidase (443 aa).

Mn(2+) contacts are provided by D246, D257, H339, E384, and E423.

This sequence belongs to the peptidase M24B family. Bacterial-type prolidase subfamily. Mn(2+) is required as a cofactor.

It carries out the reaction Xaa-L-Pro dipeptide + H2O = an L-alpha-amino acid + L-proline. Functionally, splits dipeptides with a prolyl residue in the C-terminal position. The sequence is that of Xaa-Pro dipeptidase from Salmonella choleraesuis (strain SC-B67).